The primary structure comprises 269 residues: MRVALKLAYIGTEFHGSQIQPSVETVEKELFKALRNLRIIESPKSANYICAGRTDAGVHALGQVIAFDTDRPNLAIPRIINSGLPPTIWVWAHAEVPYDFDARRHAVSRHYRYVISGEGYDISKMREASKLLLGTHDFENFSRSNGEKSTVRTLERINVRVDGDITKIDVVGNSFLWNMVRKIVTALSMIGKGVRDNDWLIQMLNPDIYEEGIEPAPAYGLTLMGVNYGEEINWIEDNYSIRRASDQNSKRILRYRVMAEVLEELIYHE.

The active-site Nucleophile is Asp55. Tyr111 contacts substrate.

It belongs to the tRNA pseudouridine synthase TruA family.

It catalyses the reaction uridine(38/39/40) in tRNA = pseudouridine(38/39/40) in tRNA. Its function is as follows. Formation of pseudouridine at positions 38, 39 and 40 in the anticodon stem and loop of transfer RNAs. This Methanosarcina mazei (strain ATCC BAA-159 / DSM 3647 / Goe1 / Go1 / JCM 11833 / OCM 88) (Methanosarcina frisia) protein is tRNA pseudouridine synthase A.